The following is a 363-amino-acid chain: Phosphoserine aminotransferase (363 aa).

Arg-41 is a binding site for L-glutamate. Residues 75–76 (AS), Trp-100, Thr-155, Asp-175, and Gln-198 contribute to the pyridoxal 5'-phosphate site. Lys-199 carries the post-translational modification N6-(pyridoxal phosphate)lysine. 239–240 (NT) contributes to the pyridoxal 5'-phosphate binding site.

The protein belongs to the class-V pyridoxal-phosphate-dependent aminotransferase family. SerC subfamily. In terms of assembly, homodimer. It depends on pyridoxal 5'-phosphate as a cofactor.

The protein resides in the cytoplasm. The enzyme catalyses O-phospho-L-serine + 2-oxoglutarate = 3-phosphooxypyruvate + L-glutamate. It catalyses the reaction 4-(phosphooxy)-L-threonine + 2-oxoglutarate = (R)-3-hydroxy-2-oxo-4-phosphooxybutanoate + L-glutamate. The protein operates within amino-acid biosynthesis; L-serine biosynthesis; L-serine from 3-phospho-D-glycerate: step 2/3. In terms of biological role, catalyzes the reversible conversion of 3-phosphohydroxypyruvate to phosphoserine and of 3-hydroxy-2-oxo-4-phosphonooxybutanoate to phosphohydroxythreonine. In Streptococcus suis (strain 98HAH33), this protein is Phosphoserine aminotransferase.